We begin with the raw amino-acid sequence, 86 residues long: Large ribosomal subunit protein bL27 (86 aa).

The tract at residues 1–22 is disordered; it reads MATKKAGGSSRNGRDSAGRRLG.

The protein belongs to the bacterial ribosomal protein bL27 family.

The sequence is that of Large ribosomal subunit protein bL27 from Rickettsia peacockii (strain Rustic).